Here is a 387-residue protein sequence, read N- to C-terminus: 3-ketoacyl-CoA thiolase (387 aa).

Cys91 functions as the Acyl-thioester intermediate in the catalytic mechanism. Catalysis depends on proton acceptor residues His343 and Cys373.

This sequence belongs to the thiolase-like superfamily. Thiolase family. As to quaternary structure, heterotetramer of two alpha chains (FadB) and two beta chains (FadA).

It is found in the cytoplasm. The catalysed reaction is an acyl-CoA + acetyl-CoA = a 3-oxoacyl-CoA + CoA. Its pathway is lipid metabolism; fatty acid beta-oxidation. Catalyzes the final step of fatty acid oxidation in which acetyl-CoA is released and the CoA ester of a fatty acid two carbons shorter is formed. In Shewanella baltica (strain OS155 / ATCC BAA-1091), this protein is 3-ketoacyl-CoA thiolase.